The primary structure comprises 315 residues: Probable cell division protein WhiA (315 aa).

The H-T-H motif DNA-binding region spans 277–311 (SLQELGAMMPSGQISKSGVNHRLRKLNQIAEGYQQ).

The protein belongs to the WhiA family.

Its function is as follows. Involved in cell division and chromosome segregation. This is Probable cell division protein WhiA from Lacticaseibacillus casei (strain BL23) (Lactobacillus casei).